A 164-amino-acid polypeptide reads, in one-letter code: Sec-independent protein translocase protein TatB (164 aa).

A helical transmembrane segment spans residues Met1–Gly21. A disordered region spans residues Ala81–Gly102.

The protein belongs to the TatB family. The Tat system comprises two distinct complexes: a TatABC complex, containing multiple copies of TatA, TatB and TatC subunits, and a separate TatA complex, containing only TatA subunits. Substrates initially bind to the TatABC complex, which probably triggers association of the separate TatA complex to form the active translocon.

The protein resides in the cell inner membrane. Part of the twin-arginine translocation (Tat) system that transports large folded proteins containing a characteristic twin-arginine motif in their signal peptide across membranes. Together with TatC, TatB is part of a receptor directly interacting with Tat signal peptides. TatB may form an oligomeric binding site that transiently accommodates folded Tat precursor proteins before their translocation. This chain is Sec-independent protein translocase protein TatB, found in Paracidovorax citrulli (strain AAC00-1) (Acidovorax citrulli).